A 202-amino-acid chain; its full sequence is Peptide methionine sulfoxide reductase B2, chloroplastic (202 aa).

The transit peptide at 1–63 directs the protein to the chloroplast; the sequence is MAFNIITPGR…RRGFHGGRIV (63 aa). One can recognise a MsrB domain in the interval 77–198; it reads EEEWRAILSP…NSISLKFTPE (122 aa). The Zn(2+) site is built by Cys116, Cys119, Cys162, and Cys165. A disulfide bridge connects residues Cys134 and Cys187. Residue Cys187 is the Nucleophile of the active site.

Belongs to the MsrB Met sulfoxide reductase family. It depends on Zn(2+) as a cofactor. Expressed in stems, young leaves, floral buds and flowers. Expressed at low levels in roots, mature leaves and siliques (at protein level).

It localises to the plastid. It is found in the chloroplast. The enzyme catalyses L-methionyl-[protein] + [thioredoxin]-disulfide + H2O = L-methionyl-(R)-S-oxide-[protein] + [thioredoxin]-dithiol. Its function is as follows. Catalyzes the reduction of methionine sulfoxide (MetSO) to methionine in proteins. Specifically reduces the MetSO R-enantiomer. Plays a protective role against oxidative stress by restoring activity to proteins that have been inactivated by methionine oxidation. May play an essential function in association with MSRB1 in maintaining vegetative growth during environmental constraints, through the preservation of photosynthetic antennae. MSRB1 and MSRB2 account for most of the leaf peptide MSR capacity. The sequence is that of Peptide methionine sulfoxide reductase B2, chloroplastic from Arabidopsis thaliana (Mouse-ear cress).